Reading from the N-terminus, the 203-residue chain is ATP-dependent Clp protease proteolytic subunit 2 (203 aa).

The active-site Nucleophile is the Ser-100. Residue His-125 is part of the active site.

Belongs to the peptidase S14 family. Fourteen ClpP subunits assemble into 2 heptameric rings which stack back to back to give a disk-like structure with a central cavity, resembling the structure of eukaryotic proteasomes.

The protein localises to the cytoplasm. The enzyme catalyses Hydrolysis of proteins to small peptides in the presence of ATP and magnesium. alpha-casein is the usual test substrate. In the absence of ATP, only oligopeptides shorter than five residues are hydrolyzed (such as succinyl-Leu-Tyr-|-NHMec, and Leu-Tyr-Leu-|-Tyr-Trp, in which cleavage of the -Tyr-|-Leu- and -Tyr-|-Trp bonds also occurs).. Its function is as follows. Cleaves peptides in various proteins in a process that requires ATP hydrolysis. Has a chymotrypsin-like activity. Plays a major role in the degradation of misfolded proteins. In Thermobifida fusca (strain YX), this protein is ATP-dependent Clp protease proteolytic subunit 2.